The chain runs to 761 residues: Mitochondrial intermediate peptidase 1 (761 aa).

Histidine 530 contributes to the Zn(2+) binding site. Glutamate 531 is a catalytic residue. The Zn(2+) site is built by histidine 534 and histidine 537.

This sequence belongs to the peptidase M3 family. It depends on Zn(2+) as a cofactor.

The protein localises to the mitochondrion matrix. The enzyme catalyses Release of an N-terminal octapeptide as second stage of processing of some proteins imported into the mitochondrion.. Functionally, cleaves proteins, imported into the mitochondrion, to their mature size. While most mitochondrial precursor proteins are processed to the mature form in one step by mitochondrial processing peptidase (MPP), the sequential cleavage by MIP of an octapeptide after initial processing by MPP is a required step for a subgroup of nuclear-encoded precursor proteins destined for the matrix or the inner membrane. This chain is Mitochondrial intermediate peptidase 1 (OCT1), found in Cryptococcus neoformans var. neoformans serotype D (strain B-3501A) (Filobasidiella neoformans).